The primary structure comprises 488 residues: MGADAAIGQIKDAKKRYAAGVLKYAQMGYWDGDYQPKDTDILALFRVTPQDGVDPVEAAAAVAGESSTATWTVVWTDRLTAADMYRAKAYKVEPVPGQPGQYFCWVAYELDLFEEGSIANLTASIIGNVFSFKPLKACRLEDMRLPVAYVKTFRGPPTGIVVERERLDKFGRPLLGATTKPKLGLSGKNYGRVVYEGLKGGLDFVKDDENINSQPFMHWRDRFLYCMEAVNKAQAETGEVKGHYLNITAGTMEEMYRRADFAKELGSVVVMVDLIVGWTAIQSISNWCRENDMLLHMHRAGHGTYTRQKGHGISFRVIAKWLRLAGVDHLHTGTAVGKLEGDPMTVQGYYNVCREDVTRTDYTRGIFFDQDWAGLRKVMPVASGGIHAGQMHQLIDLFGEDVVLQFGGGTIGHPDGIQAGAIANRVALETMILARNEGRDIKNEGPEILVEAAKWCQPLRAALDTWGEVTFNYASTDTSDFVPTASVA.

The substrate site is built by Asn-128 and Thr-178. Lys-180 serves as the catalytic Proton acceptor. Lys-182 contacts substrate. Positions 206, 208, and 209 each coordinate Mg(2+). Position 206 is an N6-carboxylysine (Lys-206). His-298 serves as the catalytic Proton acceptor. 3 residues coordinate substrate: Arg-299, His-331, and Ser-383.

It belongs to the RuBisCO large chain family. Type I subfamily. Heterohexadecamer of 8 large chains and 8 small chains. It depends on Mg(2+) as a cofactor.

It carries out the reaction 2 (2R)-3-phosphoglycerate + 2 H(+) = D-ribulose 1,5-bisphosphate + CO2 + H2O. The enzyme catalyses D-ribulose 1,5-bisphosphate + O2 = 2-phosphoglycolate + (2R)-3-phosphoglycerate + 2 H(+). Its function is as follows. RuBisCO catalyzes two reactions: the carboxylation of D-ribulose 1,5-bisphosphate, the primary event in carbon dioxide fixation, as well as the oxidative fragmentation of the pentose substrate. Both reactions occur simultaneously and in competition at the same active site. The polypeptide is Ribulose bisphosphate carboxylase large chain (Xanthobacter flavus).